Here is a 497-residue protein sequence, read N- to C-terminus: Probable cytosol aminopeptidase (497 aa).

Positions 265 and 270 each coordinate Mn(2+). Lys277 is a catalytic residue. Mn(2+) contacts are provided by Asp288, Asp347, and Glu349. Arg351 is an active-site residue.

It belongs to the peptidase M17 family. Mn(2+) serves as cofactor.

It localises to the cytoplasm. It catalyses the reaction Release of an N-terminal amino acid, Xaa-|-Yaa-, in which Xaa is preferably Leu, but may be other amino acids including Pro although not Arg or Lys, and Yaa may be Pro. Amino acid amides and methyl esters are also readily hydrolyzed, but rates on arylamides are exceedingly low.. It carries out the reaction Release of an N-terminal amino acid, preferentially leucine, but not glutamic or aspartic acids.. Functionally, presumably involved in the processing and regular turnover of intracellular proteins. Catalyzes the removal of unsubstituted N-terminal amino acids from various peptides. The chain is Probable cytosol aminopeptidase from Geobacillus sp. (strain WCH70).